The primary structure comprises 232 residues: Phosphate-specific transport system accessory protein PhoU homolog 1 (232 aa).

Belongs to the PhoU family. In terms of assembly, homodimer.

The protein resides in the cytoplasm. Its function is as follows. Plays a role in the regulation of phosphate uptake. In Thermotoga maritima (strain ATCC 43589 / DSM 3109 / JCM 10099 / NBRC 100826 / MSB8), this protein is Phosphate-specific transport system accessory protein PhoU homolog 1 (phoU1).